A 386-amino-acid polypeptide reads, in one-letter code: Dual-specificity RNA methyltransferase RlmN (386 aa).

Catalysis depends on E96, which acts as the Proton acceptor. In terms of domain architecture, Radical SAM core spans E102 to D340. The cysteines at positions 109 and 345 are disulfide-linked. Positions 116, 120, and 123 each coordinate [4Fe-4S] cluster. S-adenosyl-L-methionine contacts are provided by residues G170 to E171, S202, S224 to H226, and N302. C345 acts as the S-methylcysteine intermediate in catalysis.

The protein belongs to the radical SAM superfamily. RlmN family. It depends on [4Fe-4S] cluster as a cofactor.

Its subcellular location is the cytoplasm. The enzyme catalyses adenosine(2503) in 23S rRNA + 2 reduced [2Fe-2S]-[ferredoxin] + 2 S-adenosyl-L-methionine = 2-methyladenosine(2503) in 23S rRNA + 5'-deoxyadenosine + L-methionine + 2 oxidized [2Fe-2S]-[ferredoxin] + S-adenosyl-L-homocysteine. It catalyses the reaction adenosine(37) in tRNA + 2 reduced [2Fe-2S]-[ferredoxin] + 2 S-adenosyl-L-methionine = 2-methyladenosine(37) in tRNA + 5'-deoxyadenosine + L-methionine + 2 oxidized [2Fe-2S]-[ferredoxin] + S-adenosyl-L-homocysteine. In terms of biological role, specifically methylates position 2 of adenine 2503 in 23S rRNA and position 2 of adenine 37 in tRNAs. m2A2503 modification seems to play a crucial role in the proofreading step occurring at the peptidyl transferase center and thus would serve to optimize ribosomal fidelity. In Colwellia psychrerythraea (strain 34H / ATCC BAA-681) (Vibrio psychroerythus), this protein is Dual-specificity RNA methyltransferase RlmN.